Reading from the N-terminus, the 90-residue chain is MVKNSFSSVISQEEKKENGGSVEFQVVSFTNKIRRLTSHLELHKKDYLSQRGLRKILGKRQRLLSYLSKKNKMRYKELINQLDIRESKTQ.

Residues 1 to 11 show a composition bias toward polar residues; sequence MVKNSFSSVIS. The interval 1 to 20 is disordered; that stretch reads MVKNSFSSVISQEEKKENGG.

The protein belongs to the universal ribosomal protein uS15 family. Part of the 30S ribosomal subunit.

It is found in the plastid. The protein resides in the chloroplast. The protein is Small ribosomal subunit protein uS15c (rps15) of Cucumis sativus (Cucumber).